Reading from the N-terminus, the 379-residue chain is Glutamate 5-kinase (379 aa).

K15 lines the ATP pocket. Residues S56, D143, and N155 each contribute to the substrate site. 175-176 (SD) is a binding site for ATP. Residues 281–358 (KGTLTIDAGA…CDAAQILGIS (78 aa)) enclose the PUA domain.

The protein belongs to the glutamate 5-kinase family.

It is found in the cytoplasm. It carries out the reaction L-glutamate + ATP = L-glutamyl 5-phosphate + ADP. It functions in the pathway amino-acid biosynthesis; L-proline biosynthesis; L-glutamate 5-semialdehyde from L-glutamate: step 1/2. Catalyzes the transfer of a phosphate group to glutamate to form L-glutamate 5-phosphate. The protein is Glutamate 5-kinase of Nitrobacter hamburgensis (strain DSM 10229 / NCIMB 13809 / X14).